The following is a 108-amino-acid chain: Nucleoid-associated protein HCH_02614 (108 aa).

This sequence belongs to the YbaB/EbfC family. As to quaternary structure, homodimer.

The protein localises to the cytoplasm. Its subcellular location is the nucleoid. Functionally, binds to DNA and alters its conformation. May be involved in regulation of gene expression, nucleoid organization and DNA protection. This is Nucleoid-associated protein HCH_02614 from Hahella chejuensis (strain KCTC 2396).